We begin with the raw amino-acid sequence, 461 residues long: ATP synthase subunit beta (461 aa).

151-158 (GGAGVGKT) is an ATP binding site.

The protein belongs to the ATPase alpha/beta chains family. As to quaternary structure, F-type ATPases have 2 components, CF(1) - the catalytic core - and CF(0) - the membrane proton channel. CF(1) has five subunits: alpha(3), beta(3), gamma(1), delta(1), epsilon(1). CF(0) has three main subunits: a(1), b(2) and c(9-12). The alpha and beta chains form an alternating ring which encloses part of the gamma chain. CF(1) is attached to CF(0) by a central stalk formed by the gamma and epsilon chains, while a peripheral stalk is formed by the delta and b chains.

The protein resides in the cell inner membrane. The catalysed reaction is ATP + H2O + 4 H(+)(in) = ADP + phosphate + 5 H(+)(out). Produces ATP from ADP in the presence of a proton gradient across the membrane. The catalytic sites are hosted primarily by the beta subunits. This Idiomarina loihiensis (strain ATCC BAA-735 / DSM 15497 / L2-TR) protein is ATP synthase subunit beta.